Consider the following 350-residue polypeptide: Decarboxylase iboD (350 aa).

This sequence belongs to the phosphatidylserine decarboxylase family.

It participates in secondary metabolite biosynthesis. Decarboxylase; part of the gene cluster that mediates the biosynthesis of the psychoactive metabolites ibotenic acid and muscimol. The first committed step is glutamate hydroxylation by the 2-oxoglutarate-dependent dioxygenase iboH, and the last step is decarboxylation of ibotenic acid to muscimol by the decarboxylase iboD. The order of the intermediate reactions is somewhat ambiguous. IboA likely activates the carboxylic acid at position 5 to introduce an amide bond, and the flavin monooxygenase iboF generates the N-O bond. There are several options for the latter step. One option is that iboF directly hydroxylates the amide nitrogen formed by iboA to produce a hydroxamic acid species. Another option is that iboF hydroxylates an external N-containing compound, whose resulting N-O bond is subsequently introduced into the hydroxyglutamate scaffold. The paralogous PLP-dependent cystathionine gamma-synthase-like enzymes iboG1 and iboG2 are likely involved in substitution of the OH group at position 3 by the O-N moiety. The first cyclic intermediate is most probably tricholomic acid which is likely desaturated to ibotenic acid by the cytochrome P450 monooxygenase iboC. The protein is Decarboxylase iboD of Amanita muscaria (strain Koide BX008).